A 313-amino-acid polypeptide reads, in one-letter code: Interferon-inducible double-stranded RNA-dependent protein kinase activator A (313 aa).

The segment at 1-21 is disordered; that stretch reads MSQSRHRAAAPPMEREDSGTF. 3 sufficient for self-association and interaction with TARBP2 regions span residues 1-103, 102-195, and 195-313; these read MSQS…KANA, NASI…FSNI, and ISPE…AERK. S18 carries the phosphoserine modification. 3 DRBM domains span residues 34-101, 126-194, and 240-308; these read TPIQ…ILKA, NPIG…KFSN, and DYIQ…YLKI. 3 positions are modified to phosphoserine: S167, S246, and S287.

It belongs to the PRKRA family. In terms of assembly, homodimer. Interacts with EIF2AK2/PKR through its DRBM domains. Interacts with DICER1, AGO2 and TARBP2. Also able to interact with dsRNA. Interacts with UBC9. Forms a complex with UBC9 and p53/TP53. Interacts with DUS2L (via DRBM domain). Post-translationally, phosphorylated at Ser-246 in unstressed cells and at Ser-287 in stressed cells. Phosphorylation at Ser-246 appears to be a prerequisite for subsequent phosphorylation at Ser-287. Phosphorylation at Ser-246 and Ser-287 are necessary for activation of EIF2AK2/PKR under conditions of stress.

It localises to the cytoplasm. Its subcellular location is the perinuclear region. In terms of biological role, activates EIF2AK2/PKR in the absence of double-stranded RNA (dsRNA), leading to phosphorylation of EIF2S1/EFI2-alpha and inhibition of translation and induction of apoptosis. Required for siRNA production by DICER1 and for subsequent siRNA-mediated post-transcriptional gene silencing. Does not seem to be required for processing of pre-miRNA to miRNA by DICER1. Promotes UBC9-p53/TP53 association and sumoylation and phosphorylation of p53/TP53 at 'Lys-386' at 'Ser-392' respectively and enhances its activity in a EIF2AK2/PKR-dependent manner. The polypeptide is Interferon-inducible double-stranded RNA-dependent protein kinase activator A (PRKRA) (Bos taurus (Bovine)).